Consider the following 655-residue polypeptide: Interferon-induced GTP-binding protein Mx2 (655 aa).

Over residues 1–18 (MVLSTEENTGVDSVNLPS) the composition is skewed to polar residues. A disordered region spans residues 1–28 (MVLSTEENTGVDSVNLPSGETGLGEKDQ). One can recognise a Dynamin-type G domain in the interval 60-333 (DLALPAIAVI…LISHICKSLP (274 aa)). The interval 70-77 (GDQSSGKS) is G1 motif. GTP is bound at residue 70 to 77 (GDQSSGKS). A G2 motif region spans residues 95-97 (VTR). The segment at 171–174 (DLPG) is G3 motif. Residues 171–175 (DLPGI) and 240–243 (TKPD) each bind GTP. A G4 motif region spans residues 240-243 (TKPD). The interval 272 to 275 (KCRG) is G5 motif. The tract at residues 542-562 (EAEEEKKTKHGTSSSSQSQDL) is disordered. Residues 552-562 (GTSSSSQSQDL) are compositionally biased toward low complexity. In terms of domain architecture, GED spans 567–655 (MAEIFQHLNA…ARRRLAKFPG (89 aa)).

Belongs to the TRAFAC class dynamin-like GTPase superfamily. Dynamin/Fzo/YdjA family.

Its subcellular location is the cytoplasm. Interferon-induced dynamin-like GTPase with antiviral activity against vesicular stomatitis virus (VSV) and Hantaan virus (HNTV). The chain is Interferon-induced GTP-binding protein Mx2 (Mx2) from Mus musculus (Mouse).